A 434-amino-acid polypeptide reads, in one-letter code: MNHPDIARRVYNHTWKLDPIIRSLLDTDFYKLLMVQMIWGLYPTVNVTFSLINRTKTIRLADDIDESELRAQLDHALSLRFTKKEMIWLAGNTFYGRKQIFEPDFLQWLENFQLPEYELARKDGQYILHFHGSWAHSSMWEIPALAIISELRSRAALKKLDRFALDVLYARAKAKMWRKVERLKKLPDIKISDFGTRRRHSFLWQRWCVEALKEGIGDSFTGTSNVLLAMDTDLEALGTNAHELPMVIAALSNNDDELRRAPYQVLQDWNRYYGGNLLIVLPDTFGTEAFLCDAPDWVADWTGFRPDSAPPIEGGERIIQWWKEKGQDPREKLLIFSDALDVDTIEKTYHHFHGKVRMSFGWGTDLTNDFTGCAPQEIATLDALSLVCKVTHANGRPAVKLSDNPEKTIGDSKEVQRYLNFFGNKKRVARPVKM.

H242 is modified (phosphohistidine; by autocatalysis).

It belongs to the NAPRTase family. Post-translationally, transiently phosphorylated on a His residue during the reaction cycle. Phosphorylation strongly increases the affinity for substrates and increases the rate of nicotinate D-ribonucleotide production. Dephosphorylation regenerates the low-affinity form of the enzyme, leading to product release.

It catalyses the reaction nicotinate + 5-phospho-alpha-D-ribose 1-diphosphate + ATP + H2O = nicotinate beta-D-ribonucleotide + ADP + phosphate + diphosphate. The protein operates within cofactor biosynthesis; NAD(+) biosynthesis; nicotinate D-ribonucleotide from nicotinate: step 1/1. Its function is as follows. Catalyzes the synthesis of beta-nicotinate D-ribonucleotide from nicotinate and 5-phospho-D-ribose 1-phosphate at the expense of ATP. The sequence is that of Nicotinate phosphoribosyltransferase from Bartonella tribocorum (strain CIP 105476 / IBS 506).